The chain runs to 303 residues: Oxygen-dependent coproporphyrinogen-III oxidase (303 aa).

Ser93 is a substrate binding site. 2 residues coordinate a divalent metal cation: His97 and His107. The active-site Proton donor is His107. A substrate-binding site is contributed by Asn109–Arg111. A divalent metal cation-binding residues include His146 and His176. The segment at Tyr241–Glu276 is important for dimerization.

The protein belongs to the aerobic coproporphyrinogen-III oxidase family. Homodimer. A divalent metal cation serves as cofactor.

The protein resides in the cytoplasm. The enzyme catalyses coproporphyrinogen III + O2 + 2 H(+) = protoporphyrinogen IX + 2 CO2 + 2 H2O. It functions in the pathway porphyrin-containing compound metabolism; protoporphyrin-IX biosynthesis; protoporphyrinogen-IX from coproporphyrinogen-III (O2 route): step 1/1. Involved in the heme biosynthesis. Catalyzes the aerobic oxidative decarboxylation of propionate groups of rings A and B of coproporphyrinogen-III to yield the vinyl groups in protoporphyrinogen-IX. The polypeptide is Oxygen-dependent coproporphyrinogen-III oxidase (Wigglesworthia glossinidia brevipalpis).